The chain runs to 120 residues: C-C motif chemokine 27 (120 aa).

The signal sequence occupies residues 1 to 25 (MMEGLSPASSLPLLLLLLSPAPEAA). Intrachain disulfides connect cysteine 34–cysteine 63 and cysteine 35–cysteine 78.

It belongs to the intercrine beta (chemokine CC) family. As to quaternary structure, monomer, dimer, and tetramer. Heparin avidly promotes oligomerization. Interacts with TNFAIP6 (via Link domain). Isoform 1 is predominantly expressed in placenta and weakly in skin. Isoform 2 is predominantly expressed in testes and brain, weakly in kidney and liver and even lower in heart and muscle. Low expression of both isoforms in other tissues.

It is found in the secreted. It localises to the nucleus. In terms of biological role, chemotactic factor that attracts skin-associated memory T-lymphocytes. May play a role in mediating homing of lymphocytes to cutaneous sites. May play a role in cell migration during embryogenesis. Nuclear forms may facilitate cellular migration by inducing cytoskeletal relaxation. Binds to CCR10. This Mus musculus (Mouse) protein is C-C motif chemokine 27 (Ccl27).